Consider the following 702-residue polypeptide: Ribosomal RNA large subunit methyltransferase K/L (702 aa).

In terms of domain architecture, THUMP spans 43–154 (LVYQSLMWSR…KETASIALDL (112 aa)).

This sequence belongs to the methyltransferase superfamily. RlmKL family.

The protein resides in the cytoplasm. It carries out the reaction guanosine(2445) in 23S rRNA + S-adenosyl-L-methionine = N(2)-methylguanosine(2445) in 23S rRNA + S-adenosyl-L-homocysteine + H(+). The enzyme catalyses guanosine(2069) in 23S rRNA + S-adenosyl-L-methionine = N(2)-methylguanosine(2069) in 23S rRNA + S-adenosyl-L-homocysteine + H(+). Specifically methylates the guanine in position 2445 (m2G2445) and the guanine in position 2069 (m7G2069) of 23S rRNA. The polypeptide is Ribosomal RNA large subunit methyltransferase K/L (Escherichia coli O157:H7).